The following is a 246-amino-acid chain: 23S rRNA (guanosine-2'-O-)-methyltransferase RlmB (246 aa).

Glycine 197, isoleucine 217, and leucine 226 together coordinate S-adenosyl-L-methionine.

It belongs to the class IV-like SAM-binding methyltransferase superfamily. RNA methyltransferase TrmH family. RlmB subfamily.

The protein resides in the cytoplasm. It catalyses the reaction guanosine(2251) in 23S rRNA + S-adenosyl-L-methionine = 2'-O-methylguanosine(2251) in 23S rRNA + S-adenosyl-L-homocysteine + H(+). In terms of biological role, specifically methylates the ribose of guanosine 2251 in 23S rRNA. This is 23S rRNA (guanosine-2'-O-)-methyltransferase RlmB from Haemophilus ducreyi (strain 35000HP / ATCC 700724).